The chain runs to 87 residues: Beta-toxin Cn5 (87 aa).

Positions M1–A19 are cleaved as a signal peptide. Residues K20–S85 enclose the LCN-type CS-alpha/beta domain. 4 cysteine pairs are disulfide-bonded: C31–C84, C35–C60, C44–C65, and C48–C67.

Belongs to the long (4 C-C) scorpion toxin superfamily. Sodium channel inhibitor family. Beta subfamily. Expressed by the venom gland.

Its subcellular location is the secreted. Its function is as follows. Beta toxins bind voltage-independently at site-4 of sodium channels (Nav) and shift the voltage of activation toward more negative potentials thereby affecting sodium channel activation and promoting spontaneous and repetitive firing. This toxin is lethal to crustaceans (freshwater crayfish (Cambarellus montezumae spp.)), it provokes a reversible paralysis to insects (crickets (Achaeta spp.)), but is not toxic to mice. At high concentrations, it does displace the (beta) mammal-specific toxin Cn2 from rat brain synaptosomes. The sequence is that of Beta-toxin Cn5 from Centruroides noxius (Mexican scorpion).